We begin with the raw amino-acid sequence, 398 residues long: 1-deoxy-D-xylulose 5-phosphate reductoisomerase (398 aa).

Residues Thr10, Gly11, Ser12, Ile13, Gly36, Lys37, Asn38, and Asn124 each coordinate NADPH. Position 125 (Lys125) interacts with 1-deoxy-D-xylulose 5-phosphate. Glu126 serves as a coordination point for NADPH. Residue Asp150 participates in Mn(2+) binding. Ser151, Glu152, Ser186, and His209 together coordinate 1-deoxy-D-xylulose 5-phosphate. A Mn(2+)-binding site is contributed by Glu152. Gly215 is an NADPH binding site. 4 residues coordinate 1-deoxy-D-xylulose 5-phosphate: Ser222, Asn227, Lys228, and Glu231. Glu231 provides a ligand contact to Mn(2+).

This sequence belongs to the DXR family. Homodimer. Mg(2+) is required as a cofactor. It depends on Mn(2+) as a cofactor.

It catalyses the reaction 2-C-methyl-D-erythritol 4-phosphate + NADP(+) = 1-deoxy-D-xylulose 5-phosphate + NADPH + H(+). It functions in the pathway isoprenoid biosynthesis; isopentenyl diphosphate biosynthesis via DXP pathway; isopentenyl diphosphate from 1-deoxy-D-xylulose 5-phosphate: step 1/6. Functionally, catalyzes the NADPH-dependent rearrangement and reduction of 1-deoxy-D-xylulose-5-phosphate (DXP) to 2-C-methyl-D-erythritol 4-phosphate (MEP). This Salmonella paratyphi A (strain ATCC 9150 / SARB42) protein is 1-deoxy-D-xylulose 5-phosphate reductoisomerase.